Here is a 1131-residue protein sequence, read N- to C-terminus: Topless-related protein 2 (1131 aa).

Positions 4–36 (LSRELVFLILQFLDEEKFKESVHKLEQESGFFF) constitute a LisH domain. One can recognise a CTLH domain in the interval 34-92 (FFFNIKYFEEKALAGEWDEVEKYLSGFTKVDDNRYSMKIFFEIRKQKYLEALDRNDRAK). Threonine 214 carries the post-translational modification Phosphothreonine. WD repeat units follow at residues 345–385 (RQGS…KVVT), 407–446 (EPSI…LRQH), 451–493 (AHVG…FTFE), 495–535 (HEAP…SRVD), 585–624 (FRKK…LLTV), 629–668 (GGLP…RTLR), 763–802 (DSVS…QNPT), 829–867 (NPEG…VMTT), 870–910 (PPPP…VKTK), 913–952 (GHQK…KKKS), 959–999 (PGKA…CIHK), and 1005–1044 (ALSS…LRCR). The disordered stretch occupies residues 1099-1131 (VGVAAGSDKAGTENGRPSSSSAANNSSSDQIQR). The segment covering 1116 to 1131 (SSSSAANNSSSDQIQR) has biased composition (low complexity).

In terms of assembly, tetramer. Interacts with NINJA/AFPH2. Interacts with SMXL6, SMXL7 and SMXL8. Interacts with SPL (via EAR motif). Interacts with SPEAR3/TIE1.

The protein resides in the nucleus. Its function is as follows. Transcriptional corepressor. Negative regulator of jasmonate responses. In Arabidopsis thaliana (Mouse-ear cress), this protein is Topless-related protein 2 (TPR2).